Consider the following 1904-residue polypeptide: Fatty acid synthase beta subunit hexB (1904 aa).

An acetyltransferase (AT) domain region spans residues 24-395 (LSVAFGGQGP…TEGTGVRVIQ (372 aa)). The interval 447–691 (TQLLNAPPVM…LIVQTEGVGD (245 aa)) is enoyl reductase (ER) domain. The dehydratase (DH) domain stretch occupies residues 1001–1491 (GPAADCWTHH…RPNDRLKIQL (491 aa)). A MaoC-like domain is found at 1399–1512 (PGWNEGSTVL…MKVQAFNDET (114 aa)). Residues 1530–1893 (YVFCGQGSQE…IEHVQSVTGS (364 aa)) form a malonyl/palmitoyl transferase (MT/PT) domain region.

This sequence belongs to the fungal fatty acid synthetase subunit beta family. As to quaternary structure, [Alpha(6)beta(6)] hexamers of two multifunctional subunits (alpha and beta).

It catalyses the reaction acetyl-CoA + n malonyl-CoA + 2n NADPH + 4n H(+) = a long-chain-acyl-CoA + n CoA + n CO2 + 2n NADP(+).. It carries out the reaction holo-[ACP] + acetyl-CoA = acetyl-[ACP] + CoA. The catalysed reaction is holo-[ACP] + malonyl-CoA = malonyl-[ACP] + CoA. The enzyme catalyses a (3R)-hydroxyacyl-[ACP] = a (2E)-enoyl-[ACP] + H2O. It catalyses the reaction a 2,3-saturated acyl-[ACP] + NAD(+) = a (2E)-enoyl-[ACP] + NADH + H(+). It carries out the reaction (9Z)-octadecenoyl-[ACP] + H2O = (9Z)-octadecenoate + holo-[ACP] + H(+). It functions in the pathway mycotoxin biosynthesis. Its function is as follows. Fatty acid synthase beta subunit; part of the fragmented gene cluster that mediates the biosynthesis of dothistromin (DOTH), a polyketide toxin very similar in structure to the aflatoxin precursor, versicolorin B. The first step of the pathway is the conversion of acetate to norsolorinic acid (NOR) and requires the fatty acid synthase subunits hexA and hexB, as well as the polyketide synthase pksA. PksA combines a hexanoyl starter unit and 7 malonyl-CoA extender units to synthesize the precursor NOR. The hexanoyl starter unit is provided to the acyl-carrier protein (ACP) domain by the fungal fatty acid synthase hexA/hexB. The second step is the conversion of NOR to averantin (AVN) and requires the norsolorinic acid ketoreductase nor1, which catalyzes the dehydration of norsolorinic acid to form (1'S)-averantin. The cytochrome P450 monooxygenase avnA then catalyzes the hydroxylation of AVN to 5'hydroxyaverantin (HAVN). The next step is performed by adhA that transforms HAVN to averufin (AVF). Averufin might then be converted to hydroxyversicolorone by cypX and avfA. Hydroxyversicolorone is further converted versiconal hemiacetal acetate (VHA) by moxY. VHA is then the substrate for the versiconal hemiacetal acetate esterase est1 to yield versiconal (VAL). Versicolorin B synthase vbsA then converts VAL to versicolorin B (VERB) by closing the bisfuran ring. Then, the activity of the versicolorin B desaturase verB leads to versicolorin A (VERA). DotB, a predicted chloroperoxidase, may perform epoxidation of the A-ring of VERA. Alternatively, a cytochrome P450, such as cypX or avnA could catalyze this step. It is also possible that another, uncharacterized, cytochrome P450 enzyme is responsible for this step. Opening of the epoxide could potentially be achieved by the epoxide hydrolase epoA. However, epoA seems not to be required for DOTH biosynthesis, but other epoxide hydrolases may have the ability to complement this hydrolysis. Alternatively, opening of the epoxide ring could be achieved non-enzymatically. The next step is the deoxygenation of ring A to yield the 5,8-dihydroxyanthraquinone which is most likely catalyzed by the NADPH dehydrogenase encoded by ver1. The last stages of DOTH biosynthesis are proposed to involve hydroxylation of the bisfuran. OrdB and norB might have oxidative roles here. An alternative possibility is that cytochrome P450 monoogenases such as avnA and cypX might perform these steps in addition to previously proposed steps. In Dothistroma septosporum (strain NZE10 / CBS 128990) (Red band needle blight fungus), this protein is Fatty acid synthase beta subunit hexB.